We begin with the raw amino-acid sequence, 445 residues long: Maltoporin (445 aa).

The N-terminal stretch at 1–24 is a signal peptide; it reads MITLRKLPLAVAVAAGVMSAQAMA.

This sequence belongs to the porin LamB (TC 1.B.3) family. In terms of assembly, homotrimer formed of three 18-stranded antiparallel beta-barrels, containing three independent channels.

It localises to the cell outer membrane. It catalyses the reaction beta-maltose(in) = beta-maltose(out). Functionally, involved in the transport of maltose and maltodextrins. This chain is Maltoporin, found in Shigella flexneri.